The following is a 558-amino-acid chain: Ubiquitin carboxyl-terminal hydrolase 30 homolog (558 aa).

Residues isoleucine 6 to proline 26 form a helical membrane-spanning segment. Residues alanine 39–glycine 550 form the USP domain. Catalysis depends on cysteine 48, which acts as the Nucleophile. The tract at residues leucine 267–serine 300 is disordered. Residues proline 280–glutamine 289 show a composition bias toward low complexity. Histidine 506 serves as the catalytic Proton acceptor.

The protein belongs to the peptidase C19 family.

It is found in the mitochondrion outer membrane. It carries out the reaction Thiol-dependent hydrolysis of ester, thioester, amide, peptide and isopeptide bonds formed by the C-terminal Gly of ubiquitin (a 76-residue protein attached to proteins as an intracellular targeting signal).. In terms of biological role, deubiquitinating enzyme that acts as a key inhibitor of mitophagy by counteracting the action of parkin (park). The protein is Ubiquitin carboxyl-terminal hydrolase 30 homolog of Drosophila melanogaster (Fruit fly).